Consider the following 540-residue polypeptide: Raucaffricine-O-beta-D-glucosidase (540 aa).

A beta-D-glucoside contacts are provided by residues glutamine 36, histidine 140, and 185–186 (NE). Glutamate 186 (proton donor) is an active-site residue. Cysteine 221 and cysteine 230 are disulfide-bonded. Residues tyrosine 347, glutamate 420, tryptophan 469, 476–477 (EW), and phenylalanine 485 each bind a beta-D-glucoside. Glutamate 420 functions as the Nucleophile in the catalytic mechanism.

It belongs to the glycosyl hydrolase 1 family.

It catalyses the reaction raucaffricine + H2O = vomilenine + D-glucose. The enzyme catalyses vomilenine + UDP-alpha-D-glucose = raucaffricine + UDP + H(+). Its function is as follows. Glucosidase specifically involved in alkaloid biosynthesis leading to the accumulation of several alkaloids, including ajmaline, an important plant-derived pharmaceutical used in the treatment of heart disorders. The protein is Raucaffricine-O-beta-D-glucosidase of Rauvolfia serpentina (Serpentine wood).